We begin with the raw amino-acid sequence, 338 residues long: MDPPFNEIYNNLLYNQITKKDNDVSEIPFSFSVTAVVEEVELPVIDVSRLIDGAEEEREKCKEAIARASREWGFFQVINHGISMDVLEKMRQEQIRVFREPFDKKSKSEKFSAGSYRWGTPSATSIRQLSWSEAFHVPMTDISDNKDFTTLSSTMEKFASESEALAYMLAEVLAEKSGQNSSFFKENCVRNTCYLRMNRYPPCPKPSEVYGLMPHTDSDFLTILYQDQVGGLQLIKDNRWIAVKPNPKALIINIGDLFQAWSNGMYKSVEHRVMTNPKVERFSTAYFMCPSYDAVIECSSDRPAYRNFSFREFRQQVQEDVKKFGFKVGLPRFLNHVY.

The Fe2OG dioxygenase domain occupies 191–290 (NTCYLRMNRY…RFSTAYFMCP (100 aa)). Fe cation is bound by residues histidine 215, aspartate 217, and histidine 271. Arginine 281 is an active-site residue. Residue arginine 281 coordinates 2-oxoglutarate.

This sequence belongs to the iron/ascorbate-dependent oxidoreductase family. GA2OX subfamily. Requires Fe(2+) as cofactor.

The enzyme catalyses gibberellin A1 + 2-oxoglutarate + O2 = gibberellin A8 + succinate + CO2. It functions in the pathway plant hormone biosynthesis; gibberellin biosynthesis. Functionally, catalyzes the 2-beta-hydroxylation of gibberellins (GA) precursors, rendering them unable to be converted to active GAs. Hydroxylates the C20-GA GA12 and GA53, but is not active on C19-GAs, like GA1, GA4, GA9 and GA20. This chain is Gibberellin 2-beta-dioxygenase 8 (GA2OX8), found in Arabidopsis thaliana (Mouse-ear cress).